A 421-amino-acid chain; its full sequence is Odorant receptor 67b (421 aa).

Residues 1-48 (MQDQLDHELERIDKLPKLGLLWVEYSAYALGVNIAPRKRSSKYCRLTR) are Cytoplasmic-facing. Residues 49 to 69 (ILVLIVNLSIIYSLVAFIMEN) traverse the membrane as a helical segment. Residues 70–71 (YM) are Extracellular-facing. Residues 72–92 (ISFETYVEAVLLTFQLSVGVV) traverse the membrane as a helical segment. Residues 93 to 151 (KMFHFQNKVESCSQLVFSTETGEVLKSLGLFQLDLPRKKELLSSVSLILLNNWMIIDRQ) are Cytoplasmic-facing. The helical transmembrane segment at 152 to 172 (VMFFFKIVCMPVLYYCVRPYF) threads the bilayer. At 173-217 (QYIFDCYIKDKDTCEMTLTYPAIVPYLQLGNYEFPSYVIRFFLLQ) the chain is on the extracellular side. Residues 218–238 (SGPLWCFFAVFGFNSLFVVLT) traverse the membrane as a helical segment. The Cytoplasmic segment spans residues 239–289 (RYESGLIKVLRFLVQNSTSDILVPKDQRVKYLQCCVRLFARISSHHNQIEN). The helical transmembrane segment at 290-310 (LFKYIILVQCSVSSILICMLL) threads the bilayer. The Extracellular segment spans residues 311 to 315 (YKIST). A helical membrane pass occupies residues 316-336 (VLEVGWVWMGMIMVYFVTIAL). Topologically, residues 337 to 384 (EITLYNVSAQKVESQSELLFHDWYNCSWYNESREFKFMIKMMLLFSRR) are cytoplasmic. The chain crosses the membrane as a helical span at residues 385 to 405 (TFVLSVGGFTSLSHKFLVQVF). Over 406-421 (RLSANFFLLLRNMNNK) the chain is Extracellular.

This sequence belongs to the insect chemoreceptor superfamily. Heteromeric odorant receptor channel (TC 1.A.69) family. Or63a subfamily. Interacts with Orco. Complexes exist early in the endomembrane system in olfactory sensory neurons (OSNs), coupling these complexes to the conserved ciliary trafficking pathway.

The protein localises to the cell membrane. In terms of biological role, odorant receptor which mediates acceptance or avoidance behavior, depending on its substrates. The odorant receptor repertoire encodes a large collection of odor stimuli that vary widely in identity, intensity, and duration. May form a complex with Orco to form odorant-sensing units, providing sensitive and prolonged odorant signaling and calcium permeability. Involved in the behavioral responses to ethyl acetate, pentyl acetate, methyl caproate, anisole, heptanal, 2-heptanone, r-carvone, nonanoic acid, and pyrazines. This chain is Odorant receptor 67b (Or67b), found in Drosophila melanogaster (Fruit fly).